Consider the following 180-residue polypeptide: UPF0340 protein LL0489 (180 aa).

The protein belongs to the UPF0340 family.

The sequence is that of UPF0340 protein LL0489 (yeiF) from Lactococcus lactis subsp. lactis (strain IL1403) (Streptococcus lactis).